Reading from the N-terminus, the 386-residue chain is tRNA N6-adenosine threonylcarbamoyltransferase (386 aa).

His112 and His116 together coordinate Fe cation. Residues 134–138 (LASGG), Asp167, Gly180, and Asn322 each bind substrate. Fe cation is bound at residue Asp350.

The protein belongs to the KAE1 / TsaD family. Fe(2+) serves as cofactor.

The protein resides in the cytoplasm. It carries out the reaction L-threonylcarbamoyladenylate + adenosine(37) in tRNA = N(6)-L-threonylcarbamoyladenosine(37) in tRNA + AMP + H(+). Its function is as follows. Required for the formation of a threonylcarbamoyl group on adenosine at position 37 (t(6)A37) in tRNAs that read codons beginning with adenine. Is involved in the transfer of the threonylcarbamoyl moiety of threonylcarbamoyl-AMP (TC-AMP) to the N6 group of A37, together with TsaE and TsaB. TsaD likely plays a direct catalytic role in this reaction. The protein is tRNA N6-adenosine threonylcarbamoyltransferase of Rickettsia akari (strain Hartford).